Consider the following 157-residue polypeptide: GTP-dependent dephospho-CoA kinase (157 aa).

Asp-40, Asp-59, Lys-61, Glu-107, and Asp-128 together coordinate GTP.

Belongs to the GTP-dependent DPCK family.

It carries out the reaction 3'-dephospho-CoA + GTP = GDP + CoA + H(+). It participates in cofactor biosynthesis; coenzyme A biosynthesis. Its function is as follows. Catalyzes the GTP-dependent phosphorylation of the 3'-hydroxyl group of dephosphocoenzyme A to form coenzyme A (CoA). The protein is GTP-dependent dephospho-CoA kinase of Desulfurococcus amylolyticus (strain DSM 18924 / JCM 16383 / VKM B-2413 / 1221n) (Desulfurococcus kamchatkensis).